We begin with the raw amino-acid sequence, 115 residues long: Large ribosomal subunit protein uL24 (115 aa).

Belongs to the universal ribosomal protein uL24 family. As to quaternary structure, part of the 50S ribosomal subunit.

Functionally, one of two assembly initiator proteins, it binds directly to the 5'-end of the 23S rRNA, where it nucleates assembly of the 50S subunit. In terms of biological role, one of the proteins that surrounds the polypeptide exit tunnel on the outside of the subunit. This chain is Large ribosomal subunit protein uL24, found in Acaryochloris marina (strain MBIC 11017).